The chain runs to 108 residues: Thiosulfate sulfurtransferase GlpE (108 aa).

A Rhodanese domain is found at 17–105; that stretch reads QEKEAVLVDI…WQRQFPAEVA (89 aa). The active-site Cysteine persulfide intermediate is the Cys65.

Belongs to the GlpE family.

It localises to the cytoplasm. It catalyses the reaction thiosulfate + hydrogen cyanide = thiocyanate + sulfite + 2 H(+). It carries out the reaction thiosulfate + [thioredoxin]-dithiol = [thioredoxin]-disulfide + hydrogen sulfide + sulfite + 2 H(+). Its function is as follows. Transferase that catalyzes the transfer of sulfur from thiosulfate to thiophilic acceptors such as cyanide or dithiols. May function in a CysM-independent thiosulfate assimilation pathway by catalyzing the conversion of thiosulfate to sulfite, which can then be used for L-cysteine biosynthesis. This is Thiosulfate sulfurtransferase GlpE from Escherichia coli O157:H7.